The primary structure comprises 280 residues: Elongation factor Ts (280 aa).

Residues 79–82 form an involved in Mg(2+) ion dislocation from EF-Tu region; that stretch reads TDFV.

This sequence belongs to the EF-Ts family.

It localises to the cytoplasm. In terms of biological role, associates with the EF-Tu.GDP complex and induces the exchange of GDP to GTP. It remains bound to the aminoacyl-tRNA.EF-Tu.GTP complex up to the GTP hydrolysis stage on the ribosome. This chain is Elongation factor Ts, found in Treponema denticola (strain ATCC 35405 / DSM 14222 / CIP 103919 / JCM 8153 / KCTC 15104).